The chain runs to 101 residues: Apolipoprotein C-II (101 aa).

The signal sequence occupies residues 1 to 22; the sequence is MGTRYFLVGFLILLVLGFEAQG. The tract at residues 66 to 74 is lipid binding; it reads TVDEKIRDI. The segment at 78 to 101 is lipoprotein lipase cofactor; sequence STAAVTTYAGIITDQVFSILSGED.

Belongs to the apolipoprotein C2 family. Proapolipoprotein C-II is synthesized as a sialic acid containing glycoprotein which is subsequently desialylated prior to its proteolytic processing. Post-translationally, proapolipoprotein C-II, the major form found in plasma undergoes proteolytic cleavage of its N-terminal hexapeptide to generate apolipoprotein C-II, which occurs as the minor form in plasma.

The protein localises to the secreted. Component of chylomicrons, very low-density lipoproteins (VLDL), low-density lipoproteins (LDL), and high-density lipoproteins (HDL) in plasma. Plays an important role in lipoprotein metabolism as an activator of lipoprotein lipase. Both proapolipoprotein C-II and apolipoprotein C-II can activate lipoprotein lipase. In Capra hircus aegagrus (Wild goat), this protein is Apolipoprotein C-II (APOC2).